A 1296-amino-acid chain; its full sequence is Phosphoribosylformylglycinamidine synthase (1296 aa).

Positions 300-325 (APFSGAATGSGGEIRDEGATGRGSKP) are disordered. ATP is bound by residues 304–315 (GAATGSGGEIRD) and Ala675. Residues Glu715, Asn719, and Asp885 each coordinate Mg(2+). Residue Ser887 coordinates ATP. A Glutamine amidotransferase type-1 domain is found at 1043–1296 (MAILREQGVN…MFRNARKNVG (254 aa)). The Nucleophile role is filled by Cys1136. Residues 1232 to 1253 (TQYPANPNGSPEGITGITSTDG) are disordered. Residues His1261 and Glu1263 contribute to the active site.

It in the N-terminal section; belongs to the FGAMS family. As to quaternary structure, monomer.

It localises to the cytoplasm. The enzyme catalyses N(2)-formyl-N(1)-(5-phospho-beta-D-ribosyl)glycinamide + L-glutamine + ATP + H2O = 2-formamido-N(1)-(5-O-phospho-beta-D-ribosyl)acetamidine + L-glutamate + ADP + phosphate + H(+). It functions in the pathway purine metabolism; IMP biosynthesis via de novo pathway; 5-amino-1-(5-phospho-D-ribosyl)imidazole from N(2)-formyl-N(1)-(5-phospho-D-ribosyl)glycinamide: step 1/2. Its function is as follows. Phosphoribosylformylglycinamidine synthase involved in the purines biosynthetic pathway. Catalyzes the ATP-dependent conversion of formylglycinamide ribonucleotide (FGAR) and glutamine to yield formylglycinamidine ribonucleotide (FGAM) and glutamate. This Pseudoalteromonas translucida (strain TAC 125) protein is Phosphoribosylformylglycinamidine synthase.